We begin with the raw amino-acid sequence, 92 residues long: Cell division protein FtsB (92 aa).

Residues 1-3 lie on the Cytoplasmic side of the membrane; that stretch reads MRL. Residues 4-21 traverse the membrane as a helical segment; sequence FIFLLVAVLLLFQYDFWF. Topologically, residues 22-92 are periplasmic; that stretch reads GKNGYLDYKR…IFYHIVKEQK (71 aa). A coiled-coil region spans residues 26–74; that stretch reads YLDYKRTAQQIAQHKQENEKLSQRNQVVAAEIKDLKQGVEAIEERARFQ.

It belongs to the FtsB family. Part of a complex composed of FtsB, FtsL and FtsQ.

Its subcellular location is the cell inner membrane. Essential cell division protein. May link together the upstream cell division proteins, which are predominantly cytoplasmic, with the downstream cell division proteins, which are predominantly periplasmic. The sequence is that of Cell division protein FtsB from Pasteurella multocida (strain Pm70).